We begin with the raw amino-acid sequence, 504 residues long: UNC93-like protein C922.05c (504 aa).

Transmembrane regions (helical) follow at residues 64 to 84 (IIVS…SGLG), 97 to 116 (ANVA…GSIC), 123 to 145 (LTLA…YKHV), 149 to 169 (GFVI…WAAQ), 186 to 206 (IAIF…VPLA), 219 to 239 (GTYA…LFMV), 275 to 293 (YWVL…FTTY), 310 to 330 (LNNL…ALFL), 343 to 363 (VGWG…LAFQ), 391 to 411 (FLYI…YWII), and 452 to 472 (YFAS…PVIW).

The protein belongs to the unc-93 family.

It localises to the cytoplasm. Its subcellular location is the membrane. The chain is UNC93-like protein C922.05c from Schizosaccharomyces pombe (strain 972 / ATCC 24843) (Fission yeast).